Consider the following 417-residue polypeptide: MLEQMGIAAKQASYKLAQLSSREKNRVLEKIADELEAQSEIILNANAQDVADARANGLSEAMLDRLALTPARLKGIADDVRQVCNLADPVGQVIDGGVLDSGLRLERRRVPLGVIGVIYEARPNVTVDVASLCLKTGNAVILRGGKETCRTNAATVAVIQDALKSCGLPAGAVQAIDNPDRALVSEMLRMDKYIDMLIPRGGAGLHKLCREQSTIPVITGGIGVCHIYVDESVEIAEALKVIVNAKTQRPSTCNTVETLLVNKNIADSFLPALSKQMAESGVTLHADAAALAQLQAGPAKVVAVKAEEYDDEFLSLDLNVKIVSDLDDAIAHIREHGTQHSDAILTRDMRNAQRFVNEVDSSAVYVNASTRFTDGGQFGLGAEVAVSTQKLHARGPMGLEALTTYKWIGIGDYTIRA.

The protein belongs to the gamma-glutamyl phosphate reductase family.

It localises to the cytoplasm. It catalyses the reaction L-glutamate 5-semialdehyde + phosphate + NADP(+) = L-glutamyl 5-phosphate + NADPH + H(+). It participates in amino-acid biosynthesis; L-proline biosynthesis; L-glutamate 5-semialdehyde from L-glutamate: step 2/2. Functionally, catalyzes the NADPH-dependent reduction of L-glutamate 5-phosphate into L-glutamate 5-semialdehyde and phosphate. The product spontaneously undergoes cyclization to form 1-pyrroline-5-carboxylate. The sequence is that of Gamma-glutamyl phosphate reductase from Escherichia coli (strain K12 / MC4100 / BW2952).